Consider the following 148-residue polypeptide: D-aminoacyl-tRNA deacylase (148 aa).

Positions glycine 136–proline 137 match the Gly-cisPro motif, important for rejection of L-amino acids motif.

It belongs to the DTD family. In terms of assembly, homodimer.

The protein resides in the cytoplasm. The catalysed reaction is glycyl-tRNA(Ala) + H2O = tRNA(Ala) + glycine + H(+). The enzyme catalyses a D-aminoacyl-tRNA + H2O = a tRNA + a D-alpha-amino acid + H(+). An aminoacyl-tRNA editing enzyme that deacylates mischarged D-aminoacyl-tRNAs. Also deacylates mischarged glycyl-tRNA(Ala), protecting cells against glycine mischarging by AlaRS. Acts via tRNA-based rather than protein-based catalysis; rejects L-amino acids rather than detecting D-amino acids in the active site. By recycling D-aminoacyl-tRNA to D-amino acids and free tRNA molecules, this enzyme counteracts the toxicity associated with the formation of D-aminoacyl-tRNA entities in vivo and helps enforce protein L-homochirality. This chain is D-aminoacyl-tRNA deacylase, found in Streptococcus mutans serotype c (strain ATCC 700610 / UA159).